The primary structure comprises 41 residues: uncharacterized protein (41 aa).

The tract at residues 1-41 (MGKKHRNRITGQKKNNHIPEKDIIAAEEAHGKEYSAAKRKP) is disordered. Basic and acidic residues predominate over residues 17-41 (HIPEKDIIAAEEAHGKEYSAAKRKP).

This is an uncharacterized protein from Bacillus subtilis (strain 168).